A 60-amino-acid chain; its full sequence is Large ribosomal subunit protein bL32 (60 aa).

The span at 1 to 16 shows a compositional bias: basic residues; it reads MAVPKKKTSKSRKNMR. A disordered region spans residues 1–20; the sequence is MAVPKKKTSKSRKNMRRAHD.

Belongs to the bacterial ribosomal protein bL32 family.

The protein is Large ribosomal subunit protein bL32 of Geobacter metallireducens (strain ATCC 53774 / DSM 7210 / GS-15).